The chain runs to 195 residues: 2-cysteine peroxiredoxin, chloroplastic (195 aa).

In terms of domain architecture, Thioredoxin spans Ile3–Tyr161. The active-site Cysteine sulfenic acid (-SOH) intermediate is Cys49.

It belongs to the peroxiredoxin family. AhpC/Prx1 subfamily. In terms of assembly, homodimer; disulfide-linked, upon oxidation.

It localises to the plastid. It is found in the chloroplast. It catalyses the reaction a hydroperoxide + [thioredoxin]-dithiol = an alcohol + [thioredoxin]-disulfide + H2O. In terms of biological role, thiol-specific peroxidase that catalyzes the reduction of hydrogen peroxide and organic hydroperoxides to water and alcohols, respectively. Plays a role in cell protection against oxidative stress by detoxifying peroxides. This Chattonella marina var. antiqua (Red tide flagellate) protein is 2-cysteine peroxiredoxin, chloroplastic.